The sequence spans 431 residues: Trigger factor (431 aa).

The 86-residue stretch at 165–250 folds into the PPIase FKBP-type domain; the sequence is TDTAVFDFEG…LHQIKTKKIP (86 aa).

It belongs to the FKBP-type PPIase family. Tig subfamily.

The protein resides in the cytoplasm. It catalyses the reaction [protein]-peptidylproline (omega=180) = [protein]-peptidylproline (omega=0). Involved in protein export. Acts as a chaperone by maintaining the newly synthesized protein in an open conformation. Functions as a peptidyl-prolyl cis-trans isomerase. The protein is Trigger factor of Aster yellows witches'-broom phytoplasma (strain AYWB).